A 97-amino-acid polypeptide reads, in one-letter code: Co-chaperonin GroES (97 aa).

It belongs to the GroES chaperonin family. Heptamer of 7 subunits arranged in a ring. Interacts with the chaperonin GroEL.

It is found in the cytoplasm. Functionally, together with the chaperonin GroEL, plays an essential role in assisting protein folding. The GroEL-GroES system forms a nano-cage that allows encapsulation of the non-native substrate proteins and provides a physical environment optimized to promote and accelerate protein folding. GroES binds to the apical surface of the GroEL ring, thereby capping the opening of the GroEL channel. The protein is Co-chaperonin GroES of Azotobacter vinelandii (strain DJ / ATCC BAA-1303).